The chain runs to 150 residues: 6,7-dimethyl-8-ribityllumazine synthase (150 aa).

5-amino-6-(D-ribitylamino)uracil contacts are provided by residues F11, 43-45 (VYD), and 67-69 (AVI). (2S)-2-hydroxy-3-oxobutyl phosphate is bound at residue 72 to 73 (AT). The active-site Proton donor is H75. A 5-amino-6-(D-ribitylamino)uracil-binding site is contributed by L100. R115 serves as a coordination point for (2S)-2-hydroxy-3-oxobutyl phosphate.

The protein belongs to the DMRL synthase family.

The enzyme catalyses (2S)-2-hydroxy-3-oxobutyl phosphate + 5-amino-6-(D-ribitylamino)uracil = 6,7-dimethyl-8-(1-D-ribityl)lumazine + phosphate + 2 H2O + H(+). It functions in the pathway cofactor biosynthesis; riboflavin biosynthesis; riboflavin from 2-hydroxy-3-oxobutyl phosphate and 5-amino-6-(D-ribitylamino)uracil: step 1/2. Its function is as follows. Catalyzes the formation of 6,7-dimethyl-8-ribityllumazine by condensation of 5-amino-6-(D-ribitylamino)uracil with 3,4-dihydroxy-2-butanone 4-phosphate. This is the penultimate step in the biosynthesis of riboflavin. This Pyrobaculum aerophilum (strain ATCC 51768 / DSM 7523 / JCM 9630 / CIP 104966 / NBRC 100827 / IM2) protein is 6,7-dimethyl-8-ribityllumazine synthase.